The primary structure comprises 73 residues: Translational regulator CsrA (73 aa).

The interval 54-73 is disordered; the sequence is ENRAASDSPWSPNSLPQLPV. The span at 61 to 73 shows a compositional bias: polar residues; that stretch reads SPWSPNSLPQLPV.

This sequence belongs to the CsrA/RsmA family. In terms of assembly, homodimer; the beta-strands of each monomer intercalate to form a hydrophobic core, while the alpha-helices form wings that extend away from the core.

It localises to the cytoplasm. Its function is as follows. A translational regulator that binds mRNA to regulate translation initiation and/or mRNA stability. Usually binds in the 5'-UTR at or near the Shine-Dalgarno sequence preventing ribosome-binding, thus repressing translation. Its main target seems to be the major flagellin gene, while its function is anatagonized by FliW. The chain is Translational regulator CsrA from Treponema pallidum (strain Nichols).